Reading from the N-terminus, the 835-residue chain is Telomere length regulation protein TEL2 homolog (835 aa).

Disordered stretches follow at residues 455 to 501 and 629 to 648; these read SADC…LAPY and LSHE…HSIR. The segment covering 464–473 has biased composition (low complexity); sequence ESSPSKSCPK. The span at 474–486 shows a compositional bias: basic and acidic residues; that stretch reads AIEKSKMEAKADQ. Residues 488–499 show a composition bias toward acidic residues; the sequence is SDSELDSDDDLA. Over residues 636–648 the composition is skewed to polar residues; the sequence is ESRSTGTGQHSIR.

This sequence belongs to the TEL2 family.

Its subcellular location is the cytoplasm. It localises to the membrane. The protein resides in the nucleus. The protein localises to the chromosome. It is found in the telomere. Its function is as follows. Regulator of the DNA damage response (DDR). Part of the TTT complex that is required to stabilize protein levels of the phosphatidylinositol 3-kinase-related protein kinase (PIKK) family proteins. Promotes assembly, stabilizes and maintains the activity of TORC complexes, which regulate cell growth and survival in response to nutrient and hormonal signals. May be involved in telomere length regulation. The sequence is that of Telomere length regulation protein TEL2 homolog (telo2) from Xenopus laevis (African clawed frog).